The sequence spans 75 residues: Small ribosomal subunit protein bS18 (75 aa).

Belongs to the bacterial ribosomal protein bS18 family. In terms of assembly, part of the 30S ribosomal subunit. Forms a tight heterodimer with protein bS6.

Functionally, binds as a heterodimer with protein bS6 to the central domain of the 16S rRNA, where it helps stabilize the platform of the 30S subunit. This is Small ribosomal subunit protein bS18 from Shewanella denitrificans (strain OS217 / ATCC BAA-1090 / DSM 15013).